A 148-amino-acid chain; its full sequence is Single-stranded DNA-binding protein 2 (148 aa).

Residues 4-109 (INSVIIAGNL…IKARRIQFLN (106 aa)) enclose the SSB domain.

Homotetramer.

The sequence is that of Single-stranded DNA-binding protein 2 (ssb2) from Chlorobaculum tepidum (strain ATCC 49652 / DSM 12025 / NBRC 103806 / TLS) (Chlorobium tepidum).